Consider the following 247-residue polypeptide: NAD(P)H-quinone oxidoreductase subunit K, chloroplastic (247 aa).

4 residues coordinate [4Fe-4S] cluster: cysteine 64, cysteine 65, cysteine 129, and cysteine 160.

The protein belongs to the complex I 20 kDa subunit family. In terms of assembly, NDH is composed of at least 16 different subunits, 5 of which are encoded in the nucleus. The cofactor is [4Fe-4S] cluster.

It is found in the plastid. It localises to the chloroplast thylakoid membrane. The enzyme catalyses a plastoquinone + NADH + (n+1) H(+)(in) = a plastoquinol + NAD(+) + n H(+)(out). It catalyses the reaction a plastoquinone + NADPH + (n+1) H(+)(in) = a plastoquinol + NADP(+) + n H(+)(out). NDH shuttles electrons from NAD(P)H:plastoquinone, via FMN and iron-sulfur (Fe-S) centers, to quinones in the photosynthetic chain and possibly in a chloroplast respiratory chain. The immediate electron acceptor for the enzyme in this species is believed to be plastoquinone. Couples the redox reaction to proton translocation, and thus conserves the redox energy in a proton gradient. The polypeptide is NAD(P)H-quinone oxidoreductase subunit K, chloroplastic (Mesostigma viride (Green alga)).